The chain runs to 435 residues: Enolase (435 aa).

Gln-163 is a (2R)-2-phosphoglycerate binding site. Residue Glu-205 is the Proton donor of the active site. Mg(2+) is bound by residues Asp-243, Glu-292, and Asp-319. (2R)-2-phosphoglycerate is bound by residues Lys-344, Arg-373, Ser-374, and Lys-395. Residue Lys-344 is the Proton acceptor of the active site.

Belongs to the enolase family. Mg(2+) serves as cofactor.

The protein localises to the cytoplasm. The protein resides in the secreted. It is found in the cell surface. The catalysed reaction is (2R)-2-phosphoglycerate = phosphoenolpyruvate + H2O. The protein operates within carbohydrate degradation; glycolysis; pyruvate from D-glyceraldehyde 3-phosphate: step 4/5. Catalyzes the reversible conversion of 2-phosphoglycerate (2-PG) into phosphoenolpyruvate (PEP). It is essential for the degradation of carbohydrates via glycolysis. The protein is Enolase of Streptococcus uberis (strain ATCC BAA-854 / 0140J).